The chain runs to 212 residues: Putative DNA-binding protein At1g48610 (212 aa).

A disordered region spans residues 1 to 130 (MAKTALTPPA…GRPKKDDVAA (130 aa)). Residues 27-44 (NKPQTDATGVSATDTASQ) show a composition bias toward polar residues. 3 consecutive DNA-binding regions (a.T hook) follow at residues 45–56 (KRGRGRPPKAKS), 70–79 (TKPSGRPKRN), and 94–98 (KKRGR). The segment covering 57-72 (DSSQIGAVSAKASTKP) has biased composition (polar residues). Low complexity predominate over residues 103–113 (TVTAAVVTTAT). A DNA-binding region (a.T hook 4) is located at residues 118–127 (RKRGRPKKDD). Residues 176–210 (DLKKRTALLQKKVKEAAAKLKQAVTAIDEVQKLAD) are a coiled coil.

The protein resides in the nucleus. In terms of biological role, may bind DNA. The sequence is that of Putative DNA-binding protein At1g48610 from Arabidopsis thaliana (Mouse-ear cress).